The primary structure comprises 288 residues: tRNA-cytidine(32) 2-sulfurtransferase (288 aa).

The PP-loop motif signature appears at 70 to 75 (SGGKDS). [4Fe-4S] cluster is bound by residues cysteine 145, cysteine 148, and cysteine 236.

This sequence belongs to the TtcA family. As to quaternary structure, homodimer. The cofactor is Mg(2+). [4Fe-4S] cluster serves as cofactor.

It localises to the cytoplasm. The catalysed reaction is cytidine(32) in tRNA + S-sulfanyl-L-cysteinyl-[cysteine desulfurase] + AH2 + ATP = 2-thiocytidine(32) in tRNA + L-cysteinyl-[cysteine desulfurase] + A + AMP + diphosphate + H(+). The protein operates within tRNA modification. Functionally, catalyzes the ATP-dependent 2-thiolation of cytidine in position 32 of tRNA, to form 2-thiocytidine (s(2)C32). The sulfur atoms are provided by the cysteine/cysteine desulfurase (IscS) system. The protein is tRNA-cytidine(32) 2-sulfurtransferase of Bartonella tribocorum (strain CIP 105476 / IBS 506).